The sequence spans 113 residues: Prefoldin subunit beta (113 aa).

It belongs to the prefoldin subunit beta family. Heterohexamer of two alpha and four beta subunits.

It localises to the cytoplasm. Molecular chaperone capable of stabilizing a range of proteins. Seems to fulfill an ATP-independent, HSP70-like function in archaeal de novo protein folding. This chain is Prefoldin subunit beta, found in Methanococcus vannielii (strain ATCC 35089 / DSM 1224 / JCM 13029 / OCM 148 / SB).